The sequence spans 347 residues: MSKQAIRLTQYSHGAGCGCKISPKVLETILHSEQAKFVDPNLLVGNETRDDAAVYDLGNGTSIISTTDFFMPIVDNPFDFGRIAATNAISDIFAMGGKPIMAIAILGWPINTLSPDIAREVTEGGRFACRQAGIALAGGHSIDAPEPIFGLAVTGVVPTERVKKNSTAQAGCKLFLTKPLGIGVLTTAEKKSLLKPEHQGLATEVMCRMNVAGAAFANIDGVKAMTDVTGFGLLGHLSEMCQGAGVQAMLCYQDIPKLPGVEEYIALGAVPGGTERNFASYGHLMGDMSREVRSLLCDPQTSGGLLLAVTPDAEDDVKATAAEFGIELTAIGELVEARGGRAMVEIR.

Residue Cys17 is part of the active site. ATP is bound by residues Lys20 and 48-50; that span reads TRD. Asp51 contacts Mg(2+). ATP contacts are provided by residues Asp68, Asp91, and 139-141; that span reads GHS. Residue Asp91 coordinates Mg(2+). Residue Asp227 participates in Mg(2+) binding.

It belongs to the selenophosphate synthase 1 family. Class I subfamily. In terms of assembly, homodimer. It depends on Mg(2+) as a cofactor.

It carries out the reaction hydrogenselenide + ATP + H2O = selenophosphate + AMP + phosphate + 2 H(+). Synthesizes selenophosphate from selenide and ATP. This chain is Selenide, water dikinase, found in Salmonella typhi.